The following is a 468-amino-acid chain: UDP-N-acetylmuramoyl-L-alanine--L-glutamate ligase (468 aa).

122–128 (GTKGKST) contacts ATP.

Belongs to the MurCDEF family. MurD2 subfamily.

Its subcellular location is the cytoplasm. It catalyses the reaction UDP-N-acetyl-alpha-D-muramoyl-L-alanine + L-glutamate + ATP = UDP-N-acetyl-alpha-D-muramoyl-L-alanyl-L-glutamate + ADP + phosphate + H(+). The protein operates within cell wall biogenesis; peptidoglycan biosynthesis. Cell wall formation. Catalyzes the addition of L-glutamate to the nucleotide precursor UDP-N-acetylmuramoyl-L-alanine. This Xanthomonas axonopodis pv. citri (strain 306) protein is UDP-N-acetylmuramoyl-L-alanine--L-glutamate ligase.